Consider the following 275-residue polypeptide: NH(3)-dependent NAD(+) synthetase (275 aa).

46–53 (GISGGQDS) lines the ATP pocket. D52 is a binding site for Mg(2+). A deamido-NAD(+)-binding site is contributed by R140. T160 serves as a coordination point for ATP. E165 contributes to the Mg(2+) binding site. The deamido-NAD(+) site is built by K173 and D180. ATP-binding residues include K189 and T211. A deamido-NAD(+)-binding site is contributed by 260–261 (HK).

This sequence belongs to the NAD synthetase family. Homodimer.

It carries out the reaction deamido-NAD(+) + NH4(+) + ATP = AMP + diphosphate + NAD(+) + H(+). It functions in the pathway cofactor biosynthesis; NAD(+) biosynthesis; NAD(+) from deamido-NAD(+) (ammonia route): step 1/1. Functionally, catalyzes the ATP-dependent amidation of deamido-NAD to form NAD. Uses ammonia as a nitrogen source. This is NH(3)-dependent NAD(+) synthetase from Escherichia coli O17:K52:H18 (strain UMN026 / ExPEC).